A 448-amino-acid polypeptide reads, in one-letter code: Gamma conglutin 2 (448 aa).

The signal sequence occupies residues methionine 1 to leucine 33. One can recognise a Peptidase A1 domain in the interval histidine 63–asparagine 428. 5 cysteine pairs are disulfide-bonded: cysteine 91–cysteine 181, cysteine 105–cysteine 118, cysteine 110–cysteine 136, cysteine 121–cysteine 131, and cysteine 349–cysteine 390. Residue asparagine 133 is glycosylated (N-linked (GlcNAc...) asparagine).

The protein belongs to the peptidase A1 family. In terms of assembly, two-subunit monomeric unit made of alpha and beta subunits coupled by disulfide bonds (at pH 4.5 and under non-reducing conditions). Can also form oligomers including dimer, tetramer and cyclic hexamer (trimer of dimers) (at pH &gt; 5.5). Component of globulins complexes which accumulate in seeds. Interacts with flavonoids (e.g. apigenin glucosides) present in globulins complexes. In terms of processing, glycosylated on alpha chain. In terms of tissue distribution, expressed in developing seeds and in the young roots and cotyledons of germinating seeds and young seedlings.

It is found in the secreted. It localises to the extracellular space. Sulfur-rich seed storage protein that remains undegraded at germination. The protein is Gamma conglutin 2 of Lupinus albus (White lupine).